The following is a 340-amino-acid chain: Chitinase 2 (340 aa).

Positions 1–32 are cleaved as a signal peptide; that stretch reads MSTPRAAASLAKKAALVALAVLAAALATAARA. Positions 33-73 constitute a Chitin-binding type-1 domain; the sequence is EQCGAQAGGARCPNCLCCSRWGWCGTTSDFCGDGCQSQCSG. 8 disulfides stabilise this stretch: C35-C50, C44-C56, C47-C74, C49-C63, C67-C71, C110-C172, C184-C192, and C291-C323. E154 serves as the catalytic Proton donor.

This sequence belongs to the glycosyl hydrolase 19 family. Chitinase class I subfamily. As to expression, expressed in roots, sheaths and meristems.

It carries out the reaction Random endo-hydrolysis of N-acetyl-beta-D-glucosaminide (1-&gt;4)-beta-linkages in chitin and chitodextrins.. Its function is as follows. Hydrolyzes chitin and plays a role in defense against fungal pathogens containing chitin. Its overexpression confers enhanced resistance to sheath blight pathogen (R.solani). This is Chitinase 2 (Cht2) from Oryza sativa subsp. japonica (Rice).